The chain runs to 195 residues: Putative inactive carbonic anhydrase 5B-like protein (195 aa).

121–122 (TT) is a binding site for substrate.

Belongs to the alpha-carbonic anhydrase family.

In Homo sapiens (Human), this protein is Putative inactive carbonic anhydrase 5B-like protein (CA5BP1).